The sequence spans 416 residues: CBL-interacting serine/threonine-protein kinase 21 (416 aa).

A Protein kinase domain is found at 12–264; the sequence is YEIGRTIGEG…AEIIIKDSWF (253 aa). Residues 18–26 and lysine 41 contribute to the ATP site; that span reads IGEGNFAKV. Catalysis depends on aspartate 134, which acts as the Proton acceptor. Residues 152–178 are activation loop; the sequence is DFGLSAVPKSGDMLSTACGSPCYIAPE. Serine 156 is subject to Phosphoserine. A Phosphothreonine modification is found at threonine 167. The 25-residue stretch at 291–315 folds into the NAF domain; sequence ASSNFINAFQIIAMSSDLDLSGLFE. Residues 321–351 are PPI; the sequence is RYKTRIGSKNTAQETIKKIEAAATYVSLSVE.

This sequence belongs to the protein kinase superfamily. CAMK Ser/Thr protein kinase family. SNF1 subfamily. Interacts with CBL9. Mn(2+) is required as a cofactor.

It carries out the reaction L-seryl-[protein] + ATP = O-phospho-L-seryl-[protein] + ADP + H(+). It catalyses the reaction L-threonyl-[protein] + ATP = O-phospho-L-threonyl-[protein] + ADP + H(+). Functionally, CIPK serine-threonine protein kinases interact with CBL proteins. Binding of a CBL protein to the regulatory NAF domain of CIPK protein lead to the activation of the kinase in a calcium-dependent manner. In Arabidopsis thaliana (Mouse-ear cress), this protein is CBL-interacting serine/threonine-protein kinase 21 (CIPK21).